The chain runs to 466 residues: Ribulose bisphosphate carboxylase (466 aa).

Asn-111 contributes to the substrate binding site. The active-site Proton acceptor is Lys-166. Lys-168 serves as a coordination point for substrate. Mg(2+) is bound by residues Lys-191, Asp-193, and Glu-194. Lys-191 bears the N6-carboxylysine mark. His-287 serves as the catalytic Proton acceptor. Residues Arg-288, His-321, and Ser-368 each contribute to the substrate site.

This sequence belongs to the RuBisCO large chain family. Type II subfamily. As to quaternary structure, homodimer. The cofactor is Mg(2+).

The catalysed reaction is 2 (2R)-3-phosphoglycerate + 2 H(+) = D-ribulose 1,5-bisphosphate + CO2 + H2O. It carries out the reaction D-ribulose 1,5-bisphosphate + O2 = 2-phosphoglycolate + (2R)-3-phosphoglycerate + 2 H(+). Functionally, ruBisCO catalyzes two reactions: the carboxylation of D-ribulose 1,5-bisphosphate, the primary event in carbon dioxide fixation, as well as the oxidative fragmentation of the pentose substrate. Both reactions occur simultaneously and in competition at the same active site. This Rhodospirillum rubrum (strain ATCC 11170 / ATH 1.1.1 / DSM 467 / LMG 4362 / NCIMB 8255 / S1) protein is Ribulose bisphosphate carboxylase.